Here is a 201-residue protein sequence, read N- to C-terminus: Ribosome maturation factor RimP (201 aa).

This sequence belongs to the RimP family.

It is found in the cytoplasm. Functionally, required for maturation of 30S ribosomal subunits. The protein is Ribosome maturation factor RimP of Rhizobium johnstonii (strain DSM 114642 / LMG 32736 / 3841) (Rhizobium leguminosarum bv. viciae).